The sequence spans 1259 residues: MSQTNGNMEHSKETPQSQEVEQLTNGNHPEEQQEEEENNGGLFQISVKLPHEPHKIQVMVSSQEQVQDVRQSIVELPGTFQYTCFHLEFNGKRINDFVELSEVEDLKADSEIVLVEDPYTEKEARMHTVRIRDLVGAAGDRVDNLQGLDAGLSLHDSVTAEAAASEEKEHSLSKYDITASPSLKTILPRDEAPLPKTVKSISLSAWNPPPYHLRQKGHLLYLQVATNEGEQFQVTSHVSGFYVNKCSNAKFDPSPRTIPKKVSAHSLLTLISKISPSFNTAFEALQESNNQKDLLTTFPFQNAIPNSPWLVPPPSSNVNVHQADITRSQESYLISGVDNAETLRDWNEEFQTTRELPRETVQDRVFRERLTSKLFADYNEAAARGAVLVARGEVAPLNPTEDRDAQIFVYNNIFYSFGADGVGTFASEGGDEAARVAVGKDVLGIKAVNQLDINGLFTPGTVVVDYLGKRIVGQSIVPGIFKQREPGEHQIDYGGVEGKDVVATHPDFVSVFEKMSKALRIKKHAVWDKDSKRHDLEGSVETKGLLGTDGRKYVLDLYRVTPLDVMWQEEPNSEEYPHRMSVLRLELVEAYWRSKMSQYVKAEVERRRAVKAEAEKEKPAESSESKEQDSEEKTEEKTEESSDQERVDISGFQLALNPDVCSGQVPQTDEEKQQWAEDEKEVRDACDFLRSKVMPELVQDLHDGDVGFPMDGQSLGQLLHKRGINIRYLGKLAQLSKEKGARLDALTTLLIQEMIARAFKHIANRFMRNVPAPFVASCVAHLLNCLLGADVNANPRAEIDASLREFYPEGDFTFETVTPETLRAEIEQQVALRYRFTLESEWFASLRHLQLLRDIAIKLGLQLGAREYAFTKDQLPPKVPVVNGANNAAQDEGKKKKKKGADKSPSRAIVEEKPAVSIVPDDIVNVVPLVKDASPRSSLAEEALEAGRISLMQNQKQLGQELILESLSLHEQIYGILHPEVAKLYHQLSMLYYQTDEKEAAVELARKAVIVTERTLGVDSADTILAYLNLSLFEHASGNTKTALVYIKHAMDLWKIIYGPNHPDSITTMNNAAVMLQHLKQYADSRKWFEASLSVCESLFGKQSINTATILFQLAQALALDQDSKGAVGKMRDAYNIFLSQLGPDDRNTKEAETWLEQLTQNAVSIAKHAKDIQARRLRRINMNPRVTTLGTKVQPQVGQTAPEASGAKNAANASLDSRSIDELLKFIEGGDTSSSRSKQKKRAAASNPKLRGSKKSSA.

Positions 1–27 (MSQTNGNMEHSKETPQSQEVEQLTNGN) are enriched in polar residues. The segment at 1–38 (MSQTNGNMEHSKETPQSQEVEQLTNGNHPEEQQEEEEN) is disordered. In terms of domain architecture, Clu spans 324-568 (DITRSQESYL…RVTPLDVMWQ (245 aa)). Basic and acidic residues-rich tracts occupy residues 612–628 (AEAE…SKEQ) and 634–647 (TEEK…QERV). Disordered regions lie at residues 612–647 (AEAE…QERV) and 881–908 (VVNG…PSRA). 3 TPR repeats span residues 982 to 1015 (AKLY…TERT), 1024 to 1057 (ILAY…WKII), and 1066 to 1099 (ITTM…CESL). Disordered stretches follow at residues 1192–1215 (TKVQ…ANAS) and 1229–1259 (EGGD…KSSA).

The protein belongs to the CLU family. As to quaternary structure, may associate with the eukaryotic translation initiation factor 3 (eIF-3) complex.

Its subcellular location is the cytoplasm. Its function is as follows. mRNA-binding protein involved in proper cytoplasmic distribution of mitochondria. The polypeptide is Clustered mitochondria protein homolog (Aspergillus clavatus (strain ATCC 1007 / CBS 513.65 / DSM 816 / NCTC 3887 / NRRL 1 / QM 1276 / 107)).